We begin with the raw amino-acid sequence, 640 residues long: Chaperone protein HtpG (640 aa).

Residues 1-343 (MQTAENVEHL…SNDLPLNVSR (343 aa)) are a; substrate-binding. Positions 344–564 (EILQESKDID…THDMSGNLGR (221 aa)) are b. The segment at 565–640 (LLKSAGQKVP…LLLQNILSGK (76 aa)) is c.

The protein belongs to the heat shock protein 90 family. In terms of assembly, homodimer.

The protein resides in the cytoplasm. Its function is as follows. Molecular chaperone. Has ATPase activity. The chain is Chaperone protein HtpG from Nitrosomonas eutropha (strain DSM 101675 / C91 / Nm57).